A 62-amino-acid polypeptide reads, in one-letter code: UPF0434 protein FTM_0733 (62 aa).

The protein belongs to the UPF0434 family.

This Francisella tularensis subsp. mediasiatica (strain FSC147) protein is UPF0434 protein FTM_0733.